A 710-amino-acid polypeptide reads, in one-letter code: DNA ligase (710 aa).

The disordered stretch occupies residues Met-1–Thr-36. Residues Asp-63–Asp-67, Ser-111–Ile-112, and Glu-147 each bind NAD(+). Lys-149 functions as the N6-AMP-lysine intermediate in the catalytic mechanism. Residues Arg-170, Glu-206, and Lys-353 each contribute to the NAD(+) site. 4 residues coordinate Zn(2+): Cys-444, Cys-447, Cys-460, and Cys-466. The BRCT domain maps to Glu-623–Glu-710. Residues Ala-657–Val-689 are disordered.

Belongs to the NAD-dependent DNA ligase family. LigA subfamily. Requires Mg(2+) as cofactor. It depends on Mn(2+) as a cofactor.

It carries out the reaction NAD(+) + (deoxyribonucleotide)n-3'-hydroxyl + 5'-phospho-(deoxyribonucleotide)m = (deoxyribonucleotide)n+m + AMP + beta-nicotinamide D-nucleotide.. Its function is as follows. DNA ligase that catalyzes the formation of phosphodiester linkages between 5'-phosphoryl and 3'-hydroxyl groups in double-stranded DNA using NAD as a coenzyme and as the energy source for the reaction. It is essential for DNA replication and repair of damaged DNA. This is DNA ligase from Halorubrum lacusprofundi (strain ATCC 49239 / DSM 5036 / JCM 8891 / ACAM 34).